A 251-amino-acid polypeptide reads, in one-letter code: Precorrin-4 C(11)-methyltransferase (251 aa).

This sequence belongs to the precorrin methyltransferase family.

The enzyme catalyses precorrin-4 + S-adenosyl-L-methionine = precorrin-5 + S-adenosyl-L-homocysteine. The protein operates within cofactor biosynthesis; adenosylcobalamin biosynthesis; cob(II)yrinate a,c-diamide from precorrin-2 (aerobic route): step 4/10. In terms of biological role, catalyzes the methylation of C-11 in precorrin-4 to form precorrin-5. The sequence is that of Precorrin-4 C(11)-methyltransferase (cobM) from Mycobacterium tuberculosis (strain CDC 1551 / Oshkosh).